A 254-amino-acid polypeptide reads, in one-letter code: Small ribosomal subunit protein uS2 (254 aa).

This sequence belongs to the universal ribosomal protein uS2 family.

The chain is Small ribosomal subunit protein uS2 from Legionella pneumophila (strain Lens).